The primary structure comprises 55 residues: Small ribosomal subunit protein eS31 (55 aa).

The Zn(2+) site is built by cysteine 21, cysteine 24, cysteine 39, and cysteine 42. A C4-type zinc finger spans residues 21–42; the sequence is CPRCGPGVFLAEHADRFTCGRC.

This sequence belongs to the eukaryotic ribosomal protein eS31 family. Part of the 30S ribosomal subunit. It depends on Zn(2+) as a cofactor.

The sequence is that of Small ribosomal subunit protein eS31 from Thermoplasma volcanium (strain ATCC 51530 / DSM 4299 / JCM 9571 / NBRC 15438 / GSS1).